Reading from the N-terminus, the 329-residue chain is Probable ABC transporter permease protein MG188 homolog (329 aa).

Transmembrane regions (helical) follow at residues 30–50, 96–116, 128–148, 176–196, 234–254, and 283–303; these read FLLF…PFFL, IISL…IVFV, VFFL…IYIL, ALWG…VLVI, LIFL…ISLF, and NFAG…GLVL. The ABC transmembrane type-1 domain occupies 88 to 303; it reads LRNSFLYSII…ILGVCYGLVL (216 aa).

The protein belongs to the binding-protein-dependent transport system permease family. MalFG subfamily.

The protein localises to the cell membrane. Probably part of a binding-protein-dependent transport system. Probably responsible for the translocation of the substrate across the membrane. The chain is Probable ABC transporter permease protein MG188 homolog from Mycoplasma pneumoniae (strain ATCC 29342 / M129 / Subtype 1) (Mycoplasmoides pneumoniae).